The following is a 34-amino-acid chain: Photosystem II reaction center protein M (34 aa).

The chain crosses the membrane as a helical span at residues 7-27 (GFVASLLFVLVPTVFLIILFI).

This sequence belongs to the PsbM family. In terms of assembly, PSII is composed of 1 copy each of membrane proteins PsbA, PsbB, PsbC, PsbD, PsbE, PsbF, PsbH, PsbI, PsbJ, PsbK, PsbL, PsbM, PsbT, PsbX, PsbY, PsbZ, Psb30/Ycf12, peripheral proteins PsbO, CyanoQ (PsbQ), PsbU, PsbV and a large number of cofactors. It forms dimeric complexes.

It is found in the cellular thylakoid membrane. Functionally, one of the components of the core complex of photosystem II (PSII). PSII is a light-driven water:plastoquinone oxidoreductase that uses light energy to abstract electrons from H(2)O, generating O(2) and a proton gradient subsequently used for ATP formation. It consists of a core antenna complex that captures photons, and an electron transfer chain that converts photonic excitation into a charge separation. This subunit is found at the monomer-monomer interface. This chain is Photosystem II reaction center protein M, found in Synechococcus sp. (strain WH7803).